Consider the following 311-residue polypeptide: Pyrimidine-specific ribonucleoside hydrolase RihA (311 aa).

His240 is an active-site residue.

This sequence belongs to the IUNH family. RihA subfamily.

Its function is as follows. Hydrolyzes cytidine or uridine to ribose and cytosine or uracil, respectively. This is Pyrimidine-specific ribonucleoside hydrolase RihA from Salmonella dublin (strain CT_02021853).